The sequence spans 343 residues: Geranylgeranyl pyrophosphate synthase 1 (343 aa).

The isopentenyl diphosphate site is built by Lys43, Arg46, and His75. Asp82 and Asp86 together coordinate Mg(2+). Residue Arg91 coordinates dimethylallyl diphosphate. Isopentenyl diphosphate is bound at residue Arg92. 3 residues coordinate dimethylallyl diphosphate: Lys169, Thr170, and Gln212. Asp215 contacts Mg(2+). Positions 219, 229, and 239 each coordinate dimethylallyl diphosphate.

It belongs to the FPP/GGPP synthase family. The cofactor is Mg(2+).

It catalyses the reaction isopentenyl diphosphate + dimethylallyl diphosphate = (2E)-geranyl diphosphate + diphosphate. The catalysed reaction is isopentenyl diphosphate + (2E)-geranyl diphosphate = (2E,6E)-farnesyl diphosphate + diphosphate. The enzyme catalyses isopentenyl diphosphate + (2E,6E)-farnesyl diphosphate = (2E,6E,10E)-geranylgeranyl diphosphate + diphosphate. Geranylgeranyl pyrophosphate synthase; part of the gene cluster 4 that mediates the biosynthesis of an isoprenoid secondary metabolite. The polypeptide is Geranylgeranyl pyrophosphate synthase 1 (GGS1) (Zymoseptoria tritici (strain CBS 115943 / IPO323) (Speckled leaf blotch fungus)).